The following is a 194-amino-acid chain: uncharacterized protein (194 aa).

This is an uncharacterized protein from Escherichia coli (strain K12).